We begin with the raw amino-acid sequence, 286 residues long: 3-hydroxyanthranilate 3,4-dioxygenase (286 aa).

The segment at 1–160 is domain A (catalytic); it reads MERRLGVRAW…SEQYRTGKPI (160 aa). Residue Arg43 coordinates O2. The Fe cation site is built by His47, Glu53, and His91. Glu53 contacts substrate. Substrate is bound by residues Arg95 and Glu105. The interval 161–177 is linker; that stretch reads PDQLLKEPPFPLSTRSI. The interval 178-286 is domain B; it reads MEPMSLDAWL…QDPACKKPLG (109 aa).

This sequence belongs to the 3-HAO family. As to quaternary structure, monomer. Requires Fe(2+) as cofactor.

It localises to the cytoplasm. Its subcellular location is the cytosol. It carries out the reaction 3-hydroxyanthranilate + O2 = (2Z,4Z)-2-amino-3-carboxymuconate 6-semialdehyde. The protein operates within cofactor biosynthesis; NAD(+) biosynthesis; quinolinate from L-kynurenine: step 3/3. Functionally, catalyzes the oxidative ring opening of 3-hydroxyanthranilate to 2-amino-3-carboxymuconate semialdehyde, which spontaneously cyclizes to quinolinate. The sequence is that of 3-hydroxyanthranilate 3,4-dioxygenase from Homo sapiens (Human).